Here is a 159-residue protein sequence, read N- to C-terminus: Histone H1 (159 aa).

Disordered regions lie at residues 1-31 (MAEK…ITEL), 80-99 (KGAE…KKEK), and 132-159 (AAKK…KKKS). Over residues 10-22 (VTTKKPAATHRRR) the composition is skewed to basic residues. The region spanning 12–102 (TKKPAATHRR…GEGKKEKEKA (91 aa)) is the H15 domain. The span at 84–93 (CAGGQGTGVG) shows a compositional bias: gly residues. Positions 134–148 (KKVKAAPKKAKKPVK) are enriched in basic residues. Basic and acidic residues predominate over residues 149 to 159 (KTTEKKEKKKS).

Belongs to the histone H1/H5 family.

The protein localises to the nucleus. It is found in the chromosome. In terms of biological role, histones H1 are necessary for the condensation of nucleosome chains into higher-order structures. This is Histone H1 from Psammechinus miliaris (Green sea urchin).